A 124-amino-acid polypeptide reads, in one-letter code: MATVNQLVRKGRQKPVVKSNVPALEACPQKRGVCTRVYTTTPKKPNSAMRKVCRVRLTNGYEVSSYIGGEGHNLQEHSVVLIRGGRVKDLPGVRYHTVRGALDCSGVNDRRQGRSKYGAKRPKS.

The segment at 105 to 124 (SGVNDRRQGRSKYGAKRPKS) is disordered. Basic residues predominate over residues 113–124 (GRSKYGAKRPKS).

This sequence belongs to the universal ribosomal protein uS12 family. In terms of assembly, part of the 30S ribosomal subunit. Contacts proteins S8 and S17. May interact with IF1 in the 30S initiation complex.

With S4 and S5 plays an important role in translational accuracy. Its function is as follows. Interacts with and stabilizes bases of the 16S rRNA that are involved in tRNA selection in the A site and with the mRNA backbone. Located at the interface of the 30S and 50S subunits, it traverses the body of the 30S subunit contacting proteins on the other side and probably holding the rRNA structure together. The combined cluster of proteins S8, S12 and S17 appears to hold together the shoulder and platform of the 30S subunit. The polypeptide is Small ribosomal subunit protein uS12 (Idiomarina loihiensis (strain ATCC BAA-735 / DSM 15497 / L2-TR)).